The following is a 451-amino-acid chain: Exodeoxyribonuclease 7 large subunit (451 aa).

It belongs to the XseA family. In terms of assembly, heterooligomer composed of large and small subunits.

It is found in the cytoplasm. The catalysed reaction is Exonucleolytic cleavage in either 5'- to 3'- or 3'- to 5'-direction to yield nucleoside 5'-phosphates.. Functionally, bidirectionally degrades single-stranded DNA into large acid-insoluble oligonucleotides, which are then degraded further into small acid-soluble oligonucleotides. This Bacillus cytotoxicus (strain DSM 22905 / CIP 110041 / 391-98 / NVH 391-98) protein is Exodeoxyribonuclease 7 large subunit.